Reading from the N-terminus, the 383-residue chain is 8-amino-7-oxononanoate synthase (383 aa).

Arginine 21 lines the substrate pocket. Glycine 108 to phenylalanine 109 provides a ligand contact to pyridoxal 5'-phosphate. Position 133 (histidine 133) interacts with substrate. Pyridoxal 5'-phosphate contacts are provided by serine 179, histidine 207, and threonine 233. An N6-(pyridoxal phosphate)lysine modification is found at lysine 236. Threonine 350 is a substrate binding site.

Belongs to the class-II pyridoxal-phosphate-dependent aminotransferase family. BioF subfamily. Homodimer. Pyridoxal 5'-phosphate is required as a cofactor.

It catalyses the reaction 6-carboxyhexanoyl-[ACP] + L-alanine + H(+) = (8S)-8-amino-7-oxononanoate + holo-[ACP] + CO2. It functions in the pathway cofactor biosynthesis; biotin biosynthesis. Catalyzes the decarboxylative condensation of pimeloyl-[acyl-carrier protein] and L-alanine to produce 8-amino-7-oxononanoate (AON), [acyl-carrier protein], and carbon dioxide. The polypeptide is 8-amino-7-oxononanoate synthase (Yersinia enterocolitica serotype O:8 / biotype 1B (strain NCTC 13174 / 8081)).